The following is an 86-amino-acid chain: MKPEEVIIRVYVTEKTTRMLEEENTLTFIVRREATKNDVKRAVEQLFGVKVEKVRTLITPRGYKKAYVKLAPEYKALDVATKLGAV.

Belongs to the universal ribosomal protein uL23 family. Part of the 50S ribosomal subunit. Contacts protein L29.

In terms of biological role, binds to 23S rRNA. One of the proteins that surrounds the polypeptide exit tunnel on the outside of the ribosome. This is Large ribosomal subunit protein uL23 from Aeropyrum pernix (strain ATCC 700893 / DSM 11879 / JCM 9820 / NBRC 100138 / K1).